The sequence spans 20 residues: Snaclec ophioluxin subunit alpha (20 aa).

A disulfide bridge connects residues Cys-4 and Cys-15. The C-type lectin domain occupies 11–20 (YDQHCYRIIN).

This sequence belongs to the snaclec family. As to quaternary structure, heterodimer of subunits alpha and beta; disulfide-linked. Expressed by the venom gland.

The protein localises to the secreted. In terms of biological role, binds to the platelet and collagen receptor glycoprotein VI (GP6) and activates platelet aggregation. This chain is Snaclec ophioluxin subunit alpha, found in Ophiophagus hannah (King cobra).